The primary structure comprises 518 residues: Membrane-bound lytic murein transglycosylase F (518 aa).

The first 21 residues, 1–21 (MKKLKINYLFIGILALLLAVA), serve as a signal peptide directing secretion. Positions 22–269 (LWPSIPWFGK…RIEEKYLGHG (248 aa)) are non-LT domain. Residues 270–518 (DDFDYVDTRT…SRKGSEEKQN (249 aa)) form an LT domain region. E314 is a catalytic residue.

In the N-terminal section; belongs to the bacterial solute-binding protein 3 family. This sequence in the C-terminal section; belongs to the transglycosylase Slt family.

It localises to the cell outer membrane. The catalysed reaction is Exolytic cleavage of the (1-&gt;4)-beta-glycosidic linkage between N-acetylmuramic acid (MurNAc) and N-acetylglucosamine (GlcNAc) residues in peptidoglycan, from either the reducing or the non-reducing ends of the peptidoglycan chains, with concomitant formation of a 1,6-anhydrobond in the MurNAc residue.. Its function is as follows. Murein-degrading enzyme that degrades murein glycan strands and insoluble, high-molecular weight murein sacculi, with the concomitant formation of a 1,6-anhydromuramoyl product. Lytic transglycosylases (LTs) play an integral role in the metabolism of the peptidoglycan (PG) sacculus. Their lytic action creates space within the PG sacculus to allow for its expansion as well as for the insertion of various structures such as secretion systems and flagella. This Shigella dysenteriae serotype 1 (strain Sd197) protein is Membrane-bound lytic murein transglycosylase F.